The sequence spans 506 residues: Anaerobic nitric oxide reductase transcription regulator NorR (506 aa).

4-aspartylphosphate is present on aspartate 57. The Sigma-54 factor interaction domain maps to 187–416 (MIGLSPAMTQ…LEHAIHRAVV (230 aa)). ATP-binding positions include 215–222 (GETGTGKE) and 278–287 (ADNGTLFLDE). The H-T-H motif DNA-binding region spans 481-500 (WAASARALETDVANLHRLAK).

The protein operates within nitrogen metabolism; nitric oxide reduction. Functionally, required for the expression of anaerobic nitric oxide (NO) reductase, acts as a transcriptional activator for at least the norVW operon. Activation also requires sigma-54. This Salmonella paratyphi A (strain ATCC 9150 / SARB42) protein is Anaerobic nitric oxide reductase transcription regulator NorR.